The chain runs to 312 residues: Pyridoxal 5'-phosphate synthase subunit PDX1 (312 aa).

A D-ribose 5-phosphate-binding site is contributed by Asp-43. The Schiff-base intermediate with D-ribose 5-phosphate role is filled by Lys-100. A D-ribose 5-phosphate-binding site is contributed by Gly-172. Arg-184 lines the D-glyceraldehyde 3-phosphate pocket. D-ribose 5-phosphate-binding positions include Gly-233 and 254–255 (GS).

Belongs to the PdxS/SNZ family.

It catalyses the reaction aldehydo-D-ribose 5-phosphate + D-glyceraldehyde 3-phosphate + L-glutamine = pyridoxal 5'-phosphate + L-glutamate + phosphate + 3 H2O + H(+). It participates in cofactor biosynthesis; pyridoxal 5'-phosphate biosynthesis. Catalyzes the formation of pyridoxal 5'-phosphate from ribose 5-phosphate (RBP), glyceraldehyde 3-phosphate (G3P) and ammonia. The ammonia is provided by PDX2. Can also use ribulose 5-phosphate and dihydroxyacetone phosphate as substrates, resulting from enzyme-catalyzed isomerization of RBP and G3P, respectively. Also plays an indirect role in resistance to singlet oxygen-generating photosensitizers. The chain is Pyridoxal 5'-phosphate synthase subunit PDX1 (PDX1) from Phaseolus vulgaris (Kidney bean).